A 242-amino-acid polypeptide reads, in one-letter code: uncharacterized protein (242 aa).

Residues 2–69 (YRLAKIISNA…KPRLWIYYKP (68 aa)) enclose the S4 RNA-binding domain. The active-site Nucleophile is Asp-102.

The protein belongs to the pseudouridine synthase RsuA family.

The enzyme catalyses a uridine in RNA = a pseudouridine in RNA. This is an uncharacterized protein from Rickettsia typhi (strain ATCC VR-144 / Wilmington).